We begin with the raw amino-acid sequence, 508 residues long: MIKNIITTIDDYARTQPNNVVYDVQGVTHTYAELKAYSDALAAHLDTLDLPAKDPIIVFGGQTFEMIATFLGVVKSGRAYIPIDTHSPNERLTMINEIAKPAAVIAVADLPTGVGTTPVITPDQLAAIFATPVDYQADHVVSGDDNYYIIFTSGTTGMPKGVQISHDNLVSYVDWMLSDDFGLPDQPNSLSQPPYSFDLSVMDVYPTLALGGTLYALPKAVTDDFKQLFAALPTLPINVWVSTPSFMDICLLEPKFNAENLPTLTHFLFCGEELTHKTAATLKKRFPDARIFNTYGPTETCVAVTQIEITDAALAQYDRLPIGYAKADTRILVVDENGEAVPNGTEGELIIAGPSVSKGYLNNSEKTAKAFFELDGQPAYHSGDIGTMDADGLFRYRGRVDFQIKMHGYRIELEEVDHFLAQQQHIKQAVAVPKYDKEHKVTQMIAYVVPKPNDFESDFALTTAIKKDLQGMMMEYMIPQRFVYQTSLPLTPNGKIDVKSIIKEVNPE.

An ATP-binding site is contributed by 152 to 153; sequence TS. Aspartate 198 contacts D-alanine. 293 to 298 is a binding site for ATP; the sequence is NTYGPT. Valine 302 provides a ligand contact to D-alanine. Residues aspartate 384, 396–399, and lysine 495 each bind ATP; that span reads YRGR. A D-alanine-binding site is contributed by lysine 495.

It belongs to the ATP-dependent AMP-binding enzyme family. DltA subfamily.

The protein localises to the cytoplasm. The catalysed reaction is holo-[D-alanyl-carrier protein] + D-alanine + ATP = D-alanyl-[D-alanyl-carrier protein] + AMP + diphosphate. The protein operates within cell wall biogenesis; lipoteichoic acid biosynthesis. Its function is as follows. Catalyzes the first step in the D-alanylation of lipoteichoic acid (LTA), the activation of D-alanine and its transfer onto the D-alanyl carrier protein (Dcp) DltC. In an ATP-dependent two-step reaction, forms a high energy D-alanyl-AMP intermediate, followed by transfer of the D-alanyl residue as a thiol ester to the phosphopantheinyl prosthetic group of the Dcp. D-alanylation of LTA plays an important role in modulating the properties of the cell wall in Gram-positive bacteria, influencing the net charge of the cell wall. This chain is D-alanine--D-alanyl carrier protein ligase, found in Lactiplantibacillus plantarum (strain ATCC BAA-793 / NCIMB 8826 / WCFS1) (Lactobacillus plantarum).